The chain runs to 438 residues: Aspartate--tRNA(Asp) ligase (438 aa).

E170 contributes to the L-aspartate binding site. An aspartate region spans residues 192–195; the sequence is QLYK. Residue R214 participates in L-aspartate binding. Residues 214–216, 222–224, and E361 each bind ATP; these read RAE and RHL. Positions 361 and 364 each coordinate Mg(2+). 2 residues coordinate L-aspartate: S364 and R368. ATP is bound at residue 409 to 412; sequence GAER.

The protein belongs to the class-II aminoacyl-tRNA synthetase family. Type 2 subfamily. As to quaternary structure, homodimer. Mg(2+) serves as cofactor.

The protein resides in the cytoplasm. The enzyme catalyses tRNA(Asp) + L-aspartate + ATP = L-aspartyl-tRNA(Asp) + AMP + diphosphate. Its function is as follows. Catalyzes the attachment of L-aspartate to tRNA(Asp) in a two-step reaction: L-aspartate is first activated by ATP to form Asp-AMP and then transferred to the acceptor end of tRNA(Asp). Is specific for tRNA(Asp) since it aspartylates tRNA(Asn) 3 orders of magnitude less efficiently than tRNA(Asp). The polypeptide is Aspartate--tRNA(Asp) ligase (Thermococcus kodakarensis (strain ATCC BAA-918 / JCM 12380 / KOD1) (Pyrococcus kodakaraensis (strain KOD1))).